Here is a 100-residue protein sequence, read N- to C-terminus: uncharacterized protein (100 aa).

The region spanning 8–100 (MKQSDDQIRA…TYLPGFLETL (93 aa)) is the HTH arsR-type domain. Residues 44 to 67 (CGEVGEKCNIVKTTASYHFKTLRE) constitute a DNA-binding region (H-T-H motif).

This is an uncharacterized protein from Bacillus subtilis (strain 168).